We begin with the raw amino-acid sequence, 704 residues long: MEAIKKVFEQKKAQDATAFVAFVTAGYPKKEDTVPVLLALQAGGADIIELGIPFSDPIADGPVIQEANTVALKNDIDYPTVLGQIREARQQGLTAPVLLMGYYNPMLAYGEDKAIQDAAEAGANGFIMVDLPPEEAIAFRQKCAASNLSYVPLIAPSTTLKRIQFLASIADSFIYVVSKMGTTGSSANVAVNEELPTILSRIREYTHVPLAVGFGVATRDQFNYVADAGADGVVIGSRIVNAIKAAGDGEVPQFVENYCREVSGKGEPSRVRSPGAAQRTPSQLTPNAETAKGVENILPARFGQFGGQYVPESLVDALAELEEAHKSAIEDPAFWEEVRSLYTYSNRPSNLYLAENLTKEAGGANIWLKREDLNHTGSHKINNALGQILLAKRIGKTRIIAETGAGQHGVATATVCAKFGLECVIYMGAEDVRRQALNVFRIEMLGGKAWVIPVHSGSCTLKDAVNEAMRDWVTNLSTTHYLVGSAIGPHPFPTIVRDFQKVIGEEIKAQLKEVRGKLPDVVVACVGGGSNAIGTFYDFIPDKSVRLVGVEAGGEGIDGHKHSATLSMGQPGVLHGVRTYILQDKAGQIIETHSISAGLDYPGVGPEHAWLKDSGRADYVVCTDEDALRGFRMLTQKEGIIPALESSHAIWEGVKIAKSLPKDKDIVICLSGRGDKDVEQISELLPKWADKLDWHVSSNAIPSK.

The segment at 1 to 292 (MEAIKKVFEQ…QLTPNAETAK (292 aa)) is tryptophan synthase alpha chain. Catalysis depends on proton acceptor residues glutamate 49 and aspartate 60. The tryptophan synthase beta chain stretch occupies residues 293–704 (GVENILPARF…HVSSNAIPSK (412 aa)). Lysine 380 carries the post-translational modification N6-(pyridoxal phosphate)lysine.

This sequence in the N-terminal section; belongs to the TrpA family. It in the C-terminal section; belongs to the TrpB family. Pyridoxal 5'-phosphate serves as cofactor.

It carries out the reaction (1S,2R)-1-C-(indol-3-yl)glycerol 3-phosphate + L-serine = D-glyceraldehyde 3-phosphate + L-tryptophan + H2O. It participates in amino-acid biosynthesis; L-tryptophan biosynthesis; L-tryptophan from chorismate: step 5/5. This Coprinopsis cinerea (strain Okayama-7 / 130 / ATCC MYA-4618 / FGSC 9003) (Inky cap fungus) protein is Tryptophan synthase (TRP-1).